The sequence spans 228 residues: DNA repair protein RecO (228 aa).

The protein belongs to the RecO family.

In terms of biological role, involved in DNA repair and RecF pathway recombination. The protein is DNA repair protein RecO of Mannheimia succiniciproducens (strain KCTC 0769BP / MBEL55E).